The chain runs to 1192 residues: MLKALELAGFKSFADRTRFDFPDGITVVVGPNGSGKSNIVDAMKWVLGSQSAKSLRGKDMSDVIFKGSQTRGPAGAAEATIIFDNTGGQMPVDAPEVHVTRRVYRSGEGEYLINQQAVRLKDVKALIRGTGIGIDAYSLIEQGKVDRMLQANAKDRRAIFEEAAGISRFKAKKVEAERRLERVQTNLTRLGDIVDEVATRLKTLKSQAGKAERYRQASDRLKELRTVVAWNDWLTLSTELNEATTQLEAAQRQHRKADTLRESLEEQRQAAEMQLQTIADAAREAEQSRSELSGEIARIGGRRESDQTTLVEQRRTLIGHYRRLRAMRTEAGSAIADLRKTIAALEVAEAELADVQQKKESIAAKRDVEQATVHRIESARDDLQRDHLAAVRRVAEHEANRGRVAQQMREAARALEEIARNSVTAEEGLKTALRDHDEVARNVSELEKRITDAQREVEIADAKVCETRRVLERRREEIGSLKIRLQGITERARVLDELQQKQEGVSGGVREVLRMSNAELKKDLVGIVADCFSVDRQVAPLIDAALGPRSQYVIVRGGSVSDAISRGDIKIGTRVGIIRLDELPNRRPGDKIRLDGLAGVIGRADKMIDCEVELEPLVRHLLGNTWLVDTLATAIGLRKLSSAGLRFVTASGDLLDNDGSSVVGPPGGETGLVSRRSELAAAKSEMQHYSYQIAEAEKEVGRLTGVVDSEAAELGRHEQAMRKWITEHAAAEAKLHHVTERLSARQATVDELKRSSASHTELLATAKQQDGELAVSIQKGKQEIETLEAQRTEVDVQLTAASEQLREVQSEAMSISVEAARSEQRVESLTIAADVARRDQSQREAANQEVRDAMTRTRERITEIETRILEADNRLAELMIAMESADAKLQVLAAEANQEREATRRVQTESQAAIKAVAKATEAVATISSARDAAALKQSTLADRIAEDYQIDLRNDEPPEELAEIEDRSSVDEEISRLRGQVQNVGSVNMEALEELNELQVRYDELHGQYQDLTAAKDSLQRVIARINADSRRLFLDTLEAIRINFQKLYRKSFGGGHADLILEESDDPLEAGVEIVATPPGKPSFSNSLLSGGEKALTAVALLMSIFQYRPSPFCVLDEVDAPFDEANIGRFVTVLTEFLDQSKFIVVTHSKKTMTAATTLYGVTMQESGVSKQVSIRFEDVSEDGQINAA.

Position 31–38 (31–38) interacts with ATP; the sequence is PNGSGKSN. Coiled coils occupy residues 164–197, 234–292, 333–369, and 396–464; these read AGIS…VDEV, LTLS…RSEL, SAIA…RDVE, and EHEA…DAKV. The SMC hinge domain maps to 522–636; it reads KDLVGIVADC…LVDTLATAIG (115 aa). Coiled coils occupy residues 676–736, 772–902, and 986–1030; these read RSEL…AKLH, ELAV…EREA, and GSVN…INAD.

This sequence belongs to the SMC family. As to quaternary structure, homodimer.

It localises to the cytoplasm. Functionally, required for chromosome condensation and partitioning. The sequence is that of Chromosome partition protein Smc from Rhodopirellula baltica (strain DSM 10527 / NCIMB 13988 / SH1).